A 245-amino-acid polypeptide reads, in one-letter code: Ribonuclease PH (245 aa).

Phosphate-binding positions include arginine 86 and 124–126 (GTR).

Belongs to the RNase PH family. As to quaternary structure, homohexameric ring arranged as a trimer of dimers.

The enzyme catalyses tRNA(n+1) + phosphate = tRNA(n) + a ribonucleoside 5'-diphosphate. Its function is as follows. Phosphorolytic 3'-5' exoribonuclease that plays an important role in tRNA 3'-end maturation. Removes nucleotide residues following the 3'-CCA terminus of tRNAs; can also add nucleotides to the ends of RNA molecules by using nucleoside diphosphates as substrates, but this may not be physiologically important. Probably plays a role in initiation of 16S rRNA degradation (leading to ribosome degradation) during starvation. The protein is Ribonuclease PH of Bacillus anthracis (strain A0248).